The following is a 430-amino-acid chain: Tektin-2 (430 aa).

2 coiled-coil regions span residues 75–162 (KETL…FQHL) and 226–380 (KNRA…IACK).

Belongs to the tektin family. As to quaternary structure, microtubule inner protein component of sperm flagellar doublet microtubules. May interact with CCDC172. In terms of processing, ubiquitinated, leading to its degradation. Deubiquitinated by USP16, promoting its stability. Post-translationally, tyrosine phosphorylated. Expressed in the testes (at protein level).

It is found in the cytoplasm. It localises to the cytoskeleton. The protein localises to the cilium axoneme. Its subcellular location is the flagellum axoneme. The protein resides in the microtubule organizing center. Its function is as follows. Microtubule inner protein (MIP) part of the dynein-decorated doublet microtubules (DMTs) in cilia and flagellar axoneme. Plays a key role in the assembly or attachment of the inner dynein arm to microtubules in sperm flagella and tracheal cilia. Forms filamentous polymers in the walls of ciliary and flagellar microtubules. This is Tektin-2 (Tekt2) from Mus musculus (Mouse).